The primary structure comprises 394 residues: Phosphoglycerate kinase (394 aa).

Residues 21–23 (DFN), R36, 59–62 (HLGR), R118, and R151 each bind substrate. Position 183 is a phosphoserine (S183). K201 is a binding site for ATP. Phosphothreonine is present on T299. Residues E323 and 350–353 (GGDS) contribute to the ATP site.

Belongs to the phosphoglycerate kinase family. Monomer.

The protein localises to the cytoplasm. The enzyme catalyses (2R)-3-phosphoglycerate + ATP = (2R)-3-phospho-glyceroyl phosphate + ADP. The protein operates within carbohydrate degradation; glycolysis; pyruvate from D-glyceraldehyde 3-phosphate: step 2/5. This Geobacillus sp. (strain WCH70) protein is Phosphoglycerate kinase.